Here is a 63-residue protein sequence, read N- to C-terminus: Large ribosomal subunit protein uL29 (63 aa).

It belongs to the universal ribosomal protein uL29 family.

The protein is Large ribosomal subunit protein uL29 of Aliarcobacter butzleri (strain RM4018) (Arcobacter butzleri).